A 195-amino-acid polypeptide reads, in one-letter code: Molybdenum cofactor guanylyltransferase (195 aa).

GTP contacts are provided by residues 10 to 12, K23, N51, D69, and D99; that span reads LAG. Mg(2+) is bound at residue D99.

Belongs to the MobA family. As to quaternary structure, monomer. Requires Mg(2+) as cofactor.

It is found in the cytoplasm. The catalysed reaction is Mo-molybdopterin + GTP + H(+) = Mo-molybdopterin guanine dinucleotide + diphosphate. Its function is as follows. Transfers a GMP moiety from GTP to Mo-molybdopterin (Mo-MPT) cofactor (Moco or molybdenum cofactor) to form Mo-molybdopterin guanine dinucleotide (Mo-MGD) cofactor. The chain is Molybdenum cofactor guanylyltransferase from Yersinia pseudotuberculosis serotype O:1b (strain IP 31758).